A 378-amino-acid polypeptide reads, in one-letter code: Zinc transporter 7 (378 aa).

The Cytoplasmic portion of the chain corresponds to 1–37 (MLPLSIKDDEYKPPRLNLFRKMSGWFRSILADKTSRN). A helical membrane pass occupies residues 38–58 (LFFFLCLNLSFAFVELLYGVW). Topologically, residues 59 to 67 (SNSLGLISD) are lumenal. A helical membrane pass occupies residues 68 to 88 (SFHMFFDCTALLAGLAASVIS). Topologically, residues 89 to 102 (KWRSNDAFSYGYVR) are cytoplasmic. Residues 103-123 (AEVLAGFVNGLFLIFTAFFIF) traverse the membrane as a helical segment. At 124 to 140 (SEGVERALEPPDVHHER) the chain is on the lumenal side. A helical transmembrane segment spans residues 141–161 (LLPVSILGFIVNLIGIFVFQH). Residues 161 to 223 (HGGHGHSHGS…HGQDYCHDDH (63 aa)) are his-rich loop. At 162 to 238 (GGHGHSHGSG…TGSSKQILQG (77 aa)) the chain is on the cytoplasmic side. Residues 185–214 (HGHSHRGHGHSHEHKHGHTHDHGHSHGLSH) form a disordered region. Residues 186–211 (GHSHRGHGHSHEHKHGHTHDHGHSHG) are compositionally biased toward basic residues. The chain crosses the membrane as a helical span at residues 239–259 (VFLHIVADTLGSIGVIISAIL). Over 260 to 264 (MQNYG) the chain is Lumenal. A helical membrane pass occupies residues 265-285 (LMIADPICSMLIALLIGVSIV). Over 286-378 (PLLKESIGIL…LYIQIDVAAM (93 aa)) the chain is Cytoplasmic.

The protein belongs to the cation diffusion facilitator (CDF) transporter (TC 2.A.4) family. SLC30A subfamily. As to quaternary structure, homooligomer.

The protein localises to the golgi apparatus membrane. It localises to the cytoplasmic vesicle. It is found in the golgi apparatus. Its subcellular location is the trans-Golgi network. The protein resides in the sarcoplasmic reticulum. The protein localises to the mitochondrion. The catalysed reaction is Zn(2+)(in) = Zn(2+)(out). Functionally, zinc ion transporter mediating zinc entry from the cytosol into the lumen of organelles along the secretory pathway. By contributing to zinc ion homeostasis within the early secretory pathway, regulates the activation and folding of enzymes like alkaline phosphatases. This is Zinc transporter 7 (SLC30A7) from Gallus gallus (Chicken).